The following is a 283-amino-acid chain: 4-diphosphocytidyl-2-C-methyl-D-erythritol kinase (283 aa).

Residue Lys12 is part of the active site. Residue Pro94–Ser104 participates in ATP binding. Asp136 is an active-site residue.

This sequence belongs to the GHMP kinase family. IspE subfamily.

It carries out the reaction 4-CDP-2-C-methyl-D-erythritol + ATP = 4-CDP-2-C-methyl-D-erythritol 2-phosphate + ADP + H(+). The protein operates within isoprenoid biosynthesis; isopentenyl diphosphate biosynthesis via DXP pathway; isopentenyl diphosphate from 1-deoxy-D-xylulose 5-phosphate: step 3/6. Catalyzes the phosphorylation of the position 2 hydroxy group of 4-diphosphocytidyl-2C-methyl-D-erythritol. This Acidovorax sp. (strain JS42) protein is 4-diphosphocytidyl-2-C-methyl-D-erythritol kinase.